The chain runs to 342 residues: Succinylglutamate desuccinylase (342 aa).

Histidine 63, glutamate 66, and histidine 155 together coordinate Zn(2+). Glutamate 219 is an active-site residue.

It belongs to the AspA/AstE family. Succinylglutamate desuccinylase subfamily. The cofactor is Zn(2+).

It carries out the reaction N-succinyl-L-glutamate + H2O = L-glutamate + succinate. It functions in the pathway amino-acid degradation; L-arginine degradation via AST pathway; L-glutamate and succinate from L-arginine: step 5/5. In terms of biological role, transforms N(2)-succinylglutamate into succinate and glutamate. This chain is Succinylglutamate desuccinylase, found in Vibrio parahaemolyticus serotype O3:K6 (strain RIMD 2210633).